A 279-amino-acid chain; its full sequence is UPF0276 protein SO_2008 (279 aa).

The protein belongs to the UPF0276 family.

The sequence is that of UPF0276 protein SO_2008 from Shewanella oneidensis (strain ATCC 700550 / JCM 31522 / CIP 106686 / LMG 19005 / NCIMB 14063 / MR-1).